Consider the following 177-residue polypeptide: Ribonuclease clavin (177 aa).

The N-terminal stretch at 1–27 (MVAIKNLVLVALTAVTALAMPSPLEER) is a signal peptide. Disulfide bonds link cysteine 33-cysteine 175 and cysteine 103-cysteine 159. The active site involves histidine 77. The tract at residues 98-117 (WGNSDCDRPPKHSKNGDGKN) is disordered. The segment covering 102–117 (DCDRPPKHSKNGDGKN) has biased composition (basic and acidic residues). Glutamate 123 (proton acceptor) is an active-site residue. Histidine 164 (proton donor) is an active-site residue.

The protein belongs to the ribonuclease U2 family.

The protein localises to the secreted. Clavin has the same substrate specificity as alpha-sarcin. It is specific for purines in both single- and double-stranded RNA. Its toxic action on eukaryotic cells is the result of cleavage of a single phosphodiester bond in the 60S subunit of ribosomes. This Aspergillus clavatus (strain ATCC 1007 / CBS 513.65 / DSM 816 / NCTC 3887 / NRRL 1 / QM 1276 / 107) protein is Ribonuclease clavin (cla).